The primary structure comprises 397 residues: Phosphoglycerate transport regulatory protein PgtC (397 aa).

Residues 1–24 (MFGSCQAYSRELVMATTFSPSATA) form the signal peptide. The chain crosses the membrane as a helical span at residues 102–117 (TSVAVAVSGFGLLINR).

It is found in the cell membrane. Its function is as follows. Required for pgtP expression, it may act jointly with the PgtA/PgtB signaling proteins. The sequence is that of Phosphoglycerate transport regulatory protein PgtC (pgtC) from Salmonella typhi.